The sequence spans 716 residues: Fatty acid oxidation complex subunit alpha (716 aa).

Positions 1–189 (MIYQSPTIQV…KVGAVDAVVA (189 aa)) are enoyl-CoA hydratase/isomerase. Position 296 (Asp-296) interacts with substrate. Residues 311 to 716 (KEVNNAAVLG…AANNGSYYQA (406 aa)) are 3-hydroxyacyl-CoA dehydrogenase. NAD(+) contacts are provided by residues Met-324, Asp-343, 400–402 (VVE), Lys-407, and Ser-429. His-450 functions as the For 3-hydroxyacyl-CoA dehydrogenase activity in the catalytic mechanism. Position 453 (Asn-453) interacts with NAD(+). Residues Asn-500 and Tyr-660 each contribute to the substrate site.

This sequence in the N-terminal section; belongs to the enoyl-CoA hydratase/isomerase family. The protein in the C-terminal section; belongs to the 3-hydroxyacyl-CoA dehydrogenase family. As to quaternary structure, heterotetramer of two alpha chains (FadB) and two beta chains (FadA).

The enzyme catalyses a (3S)-3-hydroxyacyl-CoA + NAD(+) = a 3-oxoacyl-CoA + NADH + H(+). It carries out the reaction a (3S)-3-hydroxyacyl-CoA = a (2E)-enoyl-CoA + H2O. The catalysed reaction is a 4-saturated-(3S)-3-hydroxyacyl-CoA = a (3E)-enoyl-CoA + H2O. It catalyses the reaction (3S)-3-hydroxybutanoyl-CoA = (3R)-3-hydroxybutanoyl-CoA. The enzyme catalyses a (3Z)-enoyl-CoA = a 4-saturated (2E)-enoyl-CoA. It carries out the reaction a (3E)-enoyl-CoA = a 4-saturated (2E)-enoyl-CoA. It functions in the pathway lipid metabolism; fatty acid beta-oxidation. Functionally, involved in the aerobic and anaerobic degradation of long-chain fatty acids via beta-oxidation cycle. Catalyzes the formation of 3-oxoacyl-CoA from enoyl-CoA via L-3-hydroxyacyl-CoA. It can also use D-3-hydroxyacyl-CoA and cis-3-enoyl-CoA as substrate. The protein is Fatty acid oxidation complex subunit alpha of Shewanella baltica (strain OS155 / ATCC BAA-1091).